A 319-amino-acid chain; its full sequence is tRNA-cytidine(32) 2-sulfurtransferase (319 aa).

The PP-loop motif motif lies at 49–54 (SGGKDS). Residues Cys124, Cys127, and Cys215 each contribute to the [4Fe-4S] cluster site.

It belongs to the TtcA family. As to quaternary structure, homodimer. Mg(2+) serves as cofactor. It depends on [4Fe-4S] cluster as a cofactor.

It is found in the cytoplasm. It catalyses the reaction cytidine(32) in tRNA + S-sulfanyl-L-cysteinyl-[cysteine desulfurase] + AH2 + ATP = 2-thiocytidine(32) in tRNA + L-cysteinyl-[cysteine desulfurase] + A + AMP + diphosphate + H(+). It functions in the pathway tRNA modification. Its function is as follows. Catalyzes the ATP-dependent 2-thiolation of cytidine in position 32 of tRNA, to form 2-thiocytidine (s(2)C32). The sulfur atoms are provided by the cysteine/cysteine desulfurase (IscS) system. This Shewanella amazonensis (strain ATCC BAA-1098 / SB2B) protein is tRNA-cytidine(32) 2-sulfurtransferase.